Reading from the N-terminus, the 245-residue chain is Enolase-phosphatase E1 (245 aa).

The protein belongs to the HAD-like hydrolase superfamily. MasA/MtnC family. Monomer. Mg(2+) is required as a cofactor.

The enzyme catalyses 5-methylsulfanyl-2,3-dioxopentyl phosphate + H2O = 1,2-dihydroxy-5-(methylsulfanyl)pent-1-en-3-one + phosphate. Its pathway is amino-acid biosynthesis; L-methionine biosynthesis via salvage pathway; L-methionine from S-methyl-5-thio-alpha-D-ribose 1-phosphate: step 3/6. The protein operates within amino-acid biosynthesis; L-methionine biosynthesis via salvage pathway; L-methionine from S-methyl-5-thio-alpha-D-ribose 1-phosphate: step 4/6. In terms of biological role, bifunctional enzyme that catalyzes the enolization of 2,3-diketo-5-methylthiopentyl-1-phosphate (DK-MTP-1-P) into the intermediate 2-hydroxy-3-keto-5-methylthiopentenyl-1-phosphate (HK-MTPenyl-1-P), which is then dephosphorylated to form the acireductone 1,2-dihydroxy-3-keto-5-methylthiopentene (DHK-MTPene). The chain is Enolase-phosphatase E1 from Synechococcus sp. (strain CC9902).